The chain runs to 210 residues: MKNFIFNHPLISDKLSKMRDVNTGYNFFKQLLTEITTLMMYEVGKGYELEEISVTTPLATTKAHKLKHNFVIVPILRAGLGMVDGVHNVIPTARVGHIGLYRDEKTFQPVEYYSKFPQTMDDGHVIVLDPMLATGASVIKAISLVKNIQPKKPRSIKFMGLLGAPEGLKALNQAHPDVDVYLACLDEKLNDKNYIYPGLGDAGDRIFGTK.

5-phospho-alpha-D-ribose 1-diphosphate is bound by residues arginine 77, arginine 102, and 129–137 (DPMLATGAS). Uracil contacts are provided by residues isoleucine 195 and 200–202 (GDA). Aspartate 201 lines the 5-phospho-alpha-D-ribose 1-diphosphate pocket.

It belongs to the UPRTase family. The cofactor is Mg(2+).

The catalysed reaction is UMP + diphosphate = 5-phospho-alpha-D-ribose 1-diphosphate + uracil. It participates in pyrimidine metabolism; UMP biosynthesis via salvage pathway; UMP from uracil: step 1/1. With respect to regulation, allosterically activated by GTP. Catalyzes the conversion of uracil and 5-phospho-alpha-D-ribose 1-diphosphate (PRPP) to UMP and diphosphate. This Mycoplasmoides gallisepticum (strain R(low / passage 15 / clone 2)) (Mycoplasma gallisepticum) protein is Uracil phosphoribosyltransferase.